The following is a 322-amino-acid chain: Sideroflexin-2 (322 aa).

Methionine 1 is subject to N-acetylmethionine. A run of 5 helical transmembrane segments spans residues 100–122 (MIIT…WQWV), 142–164 (SVRQ…AVGM), 174–192 (LVGR…CVNI), 228–250 (VVIS…MERL), and 265–287 (PLQV…GLFP).

The protein belongs to the sideroflexin family. As to expression, widely expressed, highest levels in kidney, liver, and pancreas.

It is found in the mitochondrion inner membrane. The protein resides in the mitochondrion outer membrane. The catalysed reaction is L-serine(in) = L-serine(out). Functionally, mitochondrial amino-acid transporter that mediates transport of serine into mitochondria. Involved in mitochondrial iron homeostasis by regulating heme biosynthesis. The protein is Sideroflexin-2 of Homo sapiens (Human).